The primary structure comprises 245 residues: Terpene cyclase esdpB (245 aa).

A run of 7 helical transmembrane segments spans residues 19–39 (MVAS…VTTI), 48–68 (SGVT…FAVI), 75–95 (IAAL…YVSV), 112–132 (LPVV…ALSM), 140–160 (LYWG…GLLI), 177–197 (FIAS…WPSA), and 208–228 (WLSG…YHIS).

This sequence belongs to the paxB family.

It localises to the membrane. Its pathway is secondary metabolite biosynthesis; terpenoid biosynthesis. Terpene cyclase; part of the cluster that mediates the biosynthesis of shearones, diterpenoid pyrones (DPs) which are structurally diverse meroterpenoids consisting of a diterpene linked by a pyrone, and which may exhibit a range of bioactivities. Within the pathway, esdpB takes part to the biosynthesis of the molecular scaffold by catalyzing the cyclization of the prenyl group initiated by protonation and ring-opening of the epoxide to produce the diterpenoid pyrone scaffold. The molecular scaffold is commonly biosynthesized by a series of enzymes including the non-reducing polyketide synthase (NR-PKS) esdpA that generates an alpha-pyrone; the prenyltransferase esdpC that attaches a geranylgeranyl pyrophosphate (GGPP) produced by the GGPP synthase (GGPPS) esdpD onto the pyrone unit; the FAD-dependent monooxygenase esdpE that converts an olefin on the diterpene unit into an epoxide; and the terpene cyclase esdpB that catalyzes the cyclization reactions to give the molecular backbone shearone A. In the modification steps, esdpF oxidizes the hydroxy group to a ketone at C-3 and esdpG then attaches hydroxy groups at both C-11 and C-12. After that, esdpI hydroxylates at C-20 and esdpH hydroxylates at C-6'. The ether bridge is generated by nucleophilic attack of the hydroxy group at C-20 to the carbonyl carbon at C-3. EsdpH can also functions prior to esdpI. The different combinations of these modification enzymes lead to the production of diverse shearone derivatives, shearone I being the end product of the pathway. The alpha-ketoglutarate-dependent dioxygenase esdpJ seems not to be involved in this pathway. This chain is Terpene cyclase esdpB, found in Penicillium shearii (Eupenicillium shearii).